A 472-amino-acid polypeptide reads, in one-letter code: Cannabinoid receptor 1 (472 aa).

The Extracellular portion of the chain corresponds to 1–116; sequence MKSILDGLAD…CFMVLNPSQQ (116 aa). Residues 2-23 form a required for mitochondrial localization region; that stretch reads KSILDGLADTTFRTITTDLLYV. 2 N-linked (GlcNAc...) asparagine glycosylation sites follow: Asn-77 and Asn-83. Residues 117–142 traverse the membrane as a helical segment; sequence LAIAVLSLTLGTFTVLENLLVLCVIL. The Cytoplasmic portion of the chain corresponds to 143 to 154; the sequence is HSRSLRCRPSYH. The helical transmembrane segment at 155–175 threads the bilayer; that stretch reads FIGSLAVADLLGSVIFVYSFI. At 176–187 the chain is on the extracellular side; that stretch reads DFHVFHRKDSRN. The chain crosses the membrane as a helical span at residues 188–212; it reads VFLFKLGGVTASFTASVGSLFLTAI. Residues 213–232 are Cytoplasmic-facing; that stretch reads DRYISIHRPLAYKRIVTRPK. A helical transmembrane segment spans residues 233–255; the sequence is AVVAFCLMWTIAIVIAVLPLLGW. Residues 256 to 273 lie on the Extracellular side of the membrane; it reads NCEKLQSVCSDIFPHIDE. Residues 274–299 traverse the membrane as a helical segment; the sequence is TYLMFWIGVTSVLLLFIVYAYMYILW. Over 300–344 the chain is Cytoplasmic; the sequence is KAHSHAVRMIQRGTQKSIIIHTSEDGKVQVTRPDQARMDIRLAKT. The helical transmembrane segment at 345–365 threads the bilayer; it reads LVLILVVLIICWGPLLAIMVY. Over 366–377 the chain is Extracellular; the sequence is DVFGKMNKLIKT. A helical membrane pass occupies residues 378–399; that stretch reads VFAFCSMLCLLNSTVNPIIYAL. The Cytoplasmic portion of the chain corresponds to 400-472; the sequence is RSKDLRHAFR…VSTDTSAEAL (73 aa). Cys-415 carries S-palmitoyl cysteine lipidation. 2 positions are modified to phosphoserine: Ser-425 and Ser-429.

This sequence belongs to the G-protein coupled receptor 1 family. Interacts (via C-terminus) with CNRIP1; this interaction attenuates constitutive, but not agonist-dependent, inhibition of voltage-gated Ca(2+) channels in neurons. Associates with G protein alpha subunits, including G(i) alpha-1/GNAI1, G(i) alpha-3/GNAI3 and G(o)-alpha/GNAO1; palmitoylation is important for interaction with GNAI3 and GNAO1. In terms of processing, palmitoylation at Cys-415 is important for recruitment at plasma membrane and lipid rafts and association with G protein alpha subunits. In terms of tissue distribution, widely expressed, with highest levels in fetal and adult brain. Expression levels of isoform 2 and isoform 3 are much lower than those of isoform 1.

The protein localises to the cell membrane. It localises to the membrane raft. The protein resides in the mitochondrion outer membrane. It is found in the cell projection. Its subcellular location is the axon. The protein localises to the presynapse. With respect to regulation, hemopressin, a peptide derived from hemoglobin subunit alpha (HBA1 and/or HBA2), acts as an antagonist peptide: hemopressin-binding efficiently blocks cannabinoid receptor CNR1 and subsequent signaling. Its function is as follows. G-protein coupled receptor for endogenous cannabinoids (eCBs), including N-arachidonoylethanolamide (also called anandamide or AEA) and 2-arachidonoylglycerol (2-AG), as well as phytocannabinoids, such as delta(9)-tetrahydrocannabinol (THC). Mediates many cannabinoid-induced effects, acting, among others, on food intake, memory loss, gastrointestinal motility, catalepsy, ambulatory activity, anxiety, chronic pain. Signaling typically involves reduction in cyclic AMP. In the hypothalamus, may have a dual effect on mitochondrial respiration depending upon the agonist dose and possibly upon the cell type. Increases respiration at low doses, while decreases respiration at high doses. At high doses, CNR1 signal transduction involves G-protein alpha-i protein activation and subsequent inhibition of mitochondrial soluble adenylate cyclase, decrease in cyclic AMP concentration, inhibition of protein kinase A (PKA)-dependent phosphorylation of specific subunits of the mitochondrial electron transport system, including NDUFS2. In the hypothalamus, inhibits leptin-induced reactive oxygen species (ROS) formation and mediates cannabinoid-induced increase in SREBF1 and FASN gene expression. In response to cannabinoids, drives the release of orexigenic beta-endorphin, but not that of melanocyte-stimulating hormone alpha/alpha-MSH, from hypothalamic POMC neurons, hence promoting food intake. In the hippocampus, regulates cellular respiration and energy production in response to cannabinoids. Involved in cannabinoid-dependent depolarization-induced suppression of inhibition (DSI), a process in which depolarization of CA1 postsynaptic pyramidal neurons mobilizes eCBs, which retrogradely activate presynaptic CB1 receptors, transiently decreasing GABAergic inhibitory neurotransmission. Also reduces excitatory synaptic transmission. In superior cervical ganglions and cerebral vascular smooth muscle cells, inhibits voltage-gated Ca(2+) channels in a constitutive, as well as agonist-dependent manner. In cerebral vascular smooth muscle cells, cannabinoid-induced inhibition of voltage-gated Ca(2+) channels leads to vasodilation and decreased vascular tone. Induces leptin production in adipocytes and reduces LRP2-mediated leptin clearance in the kidney, hence participating in hyperleptinemia. In adipose tissue, CNR1 signaling leads to increased expression of SREBF1, ACACA and FASN genes. In the liver, activation by endocannabinoids leads to increased de novo lipogenesis and reduced fatty acid catabolism, associated with increased expression of SREBF1/SREBP-1, GCK, ACACA, ACACB and FASN genes. May also affect de novo cholesterol synthesis and HDL-cholesteryl ether uptake. Peripherally modulates energy metabolism. In high carbohydrate diet-induced obesity, may decrease the expression of mitochondrial dihydrolipoyl dehydrogenase/DLD in striated muscles, as well as that of selected glucose/ pyruvate metabolic enzymes, hence affecting energy expenditure through mitochondrial metabolism. In response to cannabinoid anandamide, elicits a pro-inflammatory response in macrophages, which involves NLRP3 inflammasome activation and IL1B and IL18 secretion. In macrophages infiltrating pancreatic islets, this process may participate in the progression of type-2 diabetes and associated loss of pancreatic beta-cells. Binds both 2-arachidonoylglycerol (2-AG) and anandamide. In terms of biological role, only binds 2-arachidonoylglycerol (2-AG) with high affinity. Contrary to its effect on isoform 1, 2-AG behaves as an inverse agonist on isoform 2 in assays measuring GTP binding to membranes. Functionally, only binds 2-arachidonoylglycerol (2-AG) with high affinity. Contrary to its effect on isoform 1, 2-AG behaves as an inverse agonist on isoform 3 in assays measuring GTP binding to membranes. This Homo sapiens (Human) protein is Cannabinoid receptor 1 (CNR1).